A 1581-amino-acid chain; its full sequence is Calmodulin-regulated spectrin-associated protein 1 (1581 aa).

Residues 215-330 form the Calponin-homology (CH) domain; that stretch reads ESPAHQKVRY…FIAELFWWFE (116 aa). A phosphoserine mark is found at serine 216, serine 370, serine 374, and serine 415. The disordered stretch occupies residues 351-399; it reads VLQQKSSRPPVPISNATKRSFLGSPAAMSPADQPPSTQPLAEGSHRYHL. Residues 424-470 are disordered; it reads RQKQQKVSQTEEIPDQRHRSNSLTRVDGQPRGAIGAWPDKKNRPVSQ. Threonine 511 is subject to Phosphothreonine. 5 positions are modified to phosphoserine: serine 550, serine 553, serine 560, serine 572, and serine 586. Residues 603–617 are compositionally biased toward basic and acidic residues; that stretch reads KQITTKEDERGEGRP. A disordered region spans residues 603 to 649; that stretch reads KQITTKEDERGEGRPRTIMAKRPSEGSQPMVRKKVSGGHGSRDLNRT. A phosphoserine mark is found at serine 626, serine 718, serine 724, serine 734, and serine 736. Over residues 765-785 the composition is skewed to basic and acidic residues; it reads ESAKLQEDMKVKEHEDKDDAS. 2 disordered regions span residues 765-803 and 821-866; these read ESAKLQEDMKVKEHEDKDDASGRSSPCLSTTSQLSSMSM and LNSC…SKDP. 2 stretches are compositionally biased toward low complexity: residues 792-803 and 826-837; these read LSTTSQLSSMSM and TKSSTSSSQKTT. Residues 853–865 show a composition bias toward basic and acidic residues; the sequence is QKREQSPGRHSKD. Residues 867–888 form a sufficient for interaction with SPTBN1 region; it reads ASLLASELVQLHMQLEEKRRAI. Coiled-coil stretches lie at residues 869–905 and 1005–1037; these read LLASELVQLHMQLEEKRRAIEAQKKKMEALSARQRLK and DVNECDLSIEKLNETISTLQQAILKISQQQEQL. The interval 899–918 is sufficient for interaction with calmodulin; it reads SARQRLKLGKAAFLHVVKKG. 4 disordered regions span residues 1064–1143, 1225–1251, 1288–1315, and 1332–1428; these read FVEP…ELPE, PDEDGEVVGHESSVELGGDSDQKPGVG, QLEAEVELKRDEARRKAEEDRLRKEEEK, and QALE…DWET. Phosphoserine is present on serine 1069. The segment covering 1092–1103 has biased composition (basic and acidic residues); that stretch reads RPAELKVPKDRQ. Positions 1104-1132 are enriched in polar residues; sequence QGCSRSKTPTPSVETLPQSRSLPPSTHPR. The residue at position 1133 (serine 1133) is a Phosphoserine. Positions 1225-1237 are enriched in basic and acidic residues; it reads PDEDGEVVGHESS. Positions 1265–1336 form a coiled coil; the sequence is AKKRAAFLLK…RRKQQQALEE (72 aa). Residues 1342-1353 are compositionally biased toward basic residues; the sequence is PKSKPKKPRPKS. The span at 1361–1372 shows a compositional bias: polar residues; it reads SDSGTKCSSTHN. The span at 1373–1390 shows a compositional bias: low complexity; it reads LSQTHSGSSLSLASAATT. Residues serine 1378 and serine 1407 each carry the phosphoserine modification. The CKK domain maps to 1443–1576; it reads GPKLFKEPSS…QPKRPTVPKK (134 aa). Tyrosine 1516 bears the Phosphotyrosine mark.

The protein belongs to the CAMSAP1 family. As to quaternary structure, interacts with spectrin via SPTBN1; the interaction is direct. Interacts with calmodulin; calcium-dependent it prevents interaction with spectrin. In terms of tissue distribution, expressed in the central nervous system.

The protein resides in the cytoplasm. Its subcellular location is the cytoskeleton. Functionally, key microtubule-organizing protein that specifically binds the minus-end of non-centrosomal microtubules and regulates their dynamics and organization. Specifically recognizes growing microtubule minus-ends and stabilizes microtubules. Acts on free microtubule minus-ends that are not capped by microtubule-nucleating proteins or other factors and protects microtubule minus-ends from depolymerization. In contrast to CAMSAP2 and CAMSAP3, tracks along the growing tips of minus-end microtubules without significantly affecting the polymerization rate: binds at the very tip of the microtubules minus-end and acts as a minus-end tracking protein (-TIP) that dissociates from microtubules after allowing tubulin incorporation. Through interaction with spectrin may regulate neurite outgrowth. The sequence is that of Calmodulin-regulated spectrin-associated protein 1 (Camsap1) from Mus musculus (Mouse).